Reading from the N-terminus, the 465-residue chain is Probable glycine dehydrogenase (decarboxylating) subunit 1 (465 aa).

It belongs to the GcvP family. N-terminal subunit subfamily. In terms of assembly, the glycine cleavage system is composed of four proteins: P, T, L and H. In this organism, the P 'protein' is a heterodimer of two subunits.

The catalysed reaction is N(6)-[(R)-lipoyl]-L-lysyl-[glycine-cleavage complex H protein] + glycine + H(+) = N(6)-[(R)-S(8)-aminomethyldihydrolipoyl]-L-lysyl-[glycine-cleavage complex H protein] + CO2. Its function is as follows. The glycine cleavage system catalyzes the degradation of glycine. The P protein binds the alpha-amino group of glycine through its pyridoxal phosphate cofactor; CO(2) is released and the remaining methylamine moiety is then transferred to the lipoamide cofactor of the H protein. This Aeropyrum pernix (strain ATCC 700893 / DSM 11879 / JCM 9820 / NBRC 100138 / K1) protein is Probable glycine dehydrogenase (decarboxylating) subunit 1.